A 706-amino-acid polypeptide reads, in one-letter code: Ribosomal RNA large subunit methyltransferase K/L (706 aa).

Residues 43–154 form the THUMP domain; it reads LMYQSLLWSR…RDMASVALDL (112 aa).

This sequence belongs to the methyltransferase superfamily. RlmKL family.

The protein resides in the cytoplasm. The enzyme catalyses guanosine(2445) in 23S rRNA + S-adenosyl-L-methionine = N(2)-methylguanosine(2445) in 23S rRNA + S-adenosyl-L-homocysteine + H(+). The catalysed reaction is guanosine(2069) in 23S rRNA + S-adenosyl-L-methionine = N(2)-methylguanosine(2069) in 23S rRNA + S-adenosyl-L-homocysteine + H(+). Its function is as follows. Specifically methylates the guanine in position 2445 (m2G2445) and the guanine in position 2069 (m7G2069) of 23S rRNA. In Yersinia enterocolitica serotype O:8 / biotype 1B (strain NCTC 13174 / 8081), this protein is Ribosomal RNA large subunit methyltransferase K/L.